Reading from the N-terminus, the 129-residue chain is Small ribosomal subunit protein uS11 (129 aa).

This sequence belongs to the universal ribosomal protein uS11 family. As to quaternary structure, part of the 30S ribosomal subunit. Interacts with proteins S7 and S18. Binds to IF-3.

Its function is as follows. Located on the platform of the 30S subunit, it bridges several disparate RNA helices of the 16S rRNA. Forms part of the Shine-Dalgarno cleft in the 70S ribosome. This chain is Small ribosomal subunit protein uS11, found in Staphylococcus haemolyticus (strain JCSC1435).